Here is a 31-residue protein sequence, read N- to C-terminus: Ranatuerin-2 (31 aa).

A disulfide bridge links Cys-23 with Cys-28.

The protein belongs to the frog skin active peptide (FSAP) family. Ranatuerin subfamily. As to expression, expressed by the skin glands.

The protein resides in the secreted. Its function is as follows. Antibacterial activity against Gram-positive bacterium S.aureus (MIC=60 uM). Shows no detectable hemolytic activity towards human erythrocytes. The protein is Ranatuerin-2 of Aquarana catesbeiana (American bullfrog).